An 874-amino-acid chain; its full sequence is Putative disease resistance protein At5g05400 (874 aa).

Positions 22–74 form a coiled coil; the sequence is LSRNQNRFRNLVDHVAALKKTVRQLEARRDDLLKRIKVQEDRGLNLLDEVQQW. Positions 139 to 434 constitute an NB-ARC domain; sequence AQKGPIPKVE…GQGIILGSKG (296 aa). An ATP-binding site is contributed by 182 to 189; sequence GMGGVGKT. 7 LRR repeats span residues 483–505, 506–527, 528–548, 552–574, 575–597, 598–620, and 621–642; these read QKNV…EDQK, AVRR…LHCP, KLET…EFLS, ILMV…SPLY, SLRF…YALR, NLLY…HDLP, and NLEV…VRQI.

Belongs to the disease resistance NB-LRR family.

In terms of biological role, potential disease resistance protein. The sequence is that of Putative disease resistance protein At5g05400 from Arabidopsis thaliana (Mouse-ear cress).